Here is a 358-residue protein sequence, read N- to C-terminus: 3-isopropylmalate dehydrogenase (358 aa).

76–89 (GPRWDNLTGAERPE) is a binding site for NAD(+). The substrate site is built by R96, R106, R135, and D225. Residues D225, D249, and D253 each coordinate Mg(2+). 283 to 295 (GSAPDIAGQNKAN) is an NAD(+) binding site.

It belongs to the isocitrate and isopropylmalate dehydrogenases family. LeuB type 1 subfamily. As to quaternary structure, homodimer. The cofactor is Mg(2+). Mn(2+) is required as a cofactor.

It is found in the cytoplasm. The enzyme catalyses (2R,3S)-3-isopropylmalate + NAD(+) = 4-methyl-2-oxopentanoate + CO2 + NADH. The protein operates within amino-acid biosynthesis; L-leucine biosynthesis; L-leucine from 3-methyl-2-oxobutanoate: step 3/4. Catalyzes the oxidation of 3-carboxy-2-hydroxy-4-methylpentanoate (3-isopropylmalate) to 3-carboxy-4-methyl-2-oxopentanoate. The product decarboxylates to 4-methyl-2 oxopentanoate. The polypeptide is 3-isopropylmalate dehydrogenase (Oleidesulfovibrio alaskensis (strain ATCC BAA-1058 / DSM 17464 / G20) (Desulfovibrio alaskensis)).